Reading from the N-terminus, the 209-residue chain is MNDNLKSSGIMLVISSPSGGGKTTISHLLIDELQNDLVRSVSVTTREPRDGEVNGKDYFFVTEHEFINLCNTDQMLEYAKVFGNYYGIPRKFVMDNITTGVSVLFSIDWQGAFKLIDIMREHVVSVFILPPSMEELRRRLYNRSGKSDIVKKRLGEAAFEIDHCYRYDYVIVNHDVEESVHQIKCIFTSERLRVQRRILLKQFIDNYIK.

The Guanylate kinase-like domain maps to 9–188; sequence GIMLVISSPS…SVHQIKCIFT (180 aa). 16 to 23 serves as a coordination point for ATP; the sequence is SPSGGGKT.

This sequence belongs to the guanylate kinase family.

Its subcellular location is the cytoplasm. The enzyme catalyses GMP + ATP = GDP + ADP. Essential for recycling GMP and indirectly, cGMP. The chain is Guanylate kinase from Ehrlichia canis (strain Jake).